Consider the following 174-residue polypeptide: Large ribosomal subunit protein uL10 (174 aa).

This sequence belongs to the universal ribosomal protein uL10 family. Part of the ribosomal stalk of the 50S ribosomal subunit. The N-terminus interacts with L11 and the large rRNA to form the base of the stalk. The C-terminus forms an elongated spine to which L12 dimers bind in a sequential fashion forming a multimeric L10(L12)X complex.

Its function is as follows. Forms part of the ribosomal stalk, playing a central role in the interaction of the ribosome with GTP-bound translation factors. This Syntrophus aciditrophicus (strain SB) protein is Large ribosomal subunit protein uL10.